A 333-amino-acid polypeptide reads, in one-letter code: MRITVLGAGAWGTALSVGIAPRHDTLLWARDAAQAAHIEASRDNRRYLPGVALPAALRLTADLDAAIAHAQADGGLIVIATPMSGLREMLARCAASGAGLWWLCKGFEAGTGALGHEVAREVAPAARVGVLSGPSFALEVARGQPTALVAASTDEALRNQAVEAFHSESLRVYTSADPVGVEVGGAVKNVIAIATGIADGMGLGLNARAALVTRGLAEITRLGTALGARVDTFMGLSGLGDLVLTATGDLSRNRQVGLQLAQGRSLPEVLAALGHVAEGVYSAATVLARAQALGVDMPITAAVVAVLDGRLTPAQALERLMRRQARAEGHAPD.

NADPH contacts are provided by Trp-11, Arg-30, and Lys-105. Lys-105, Gly-133, and Ser-135 together coordinate sn-glycerol 3-phosphate. Ala-137 is a binding site for NADPH. Sn-glycerol 3-phosphate-binding residues include Lys-188, Asp-241, Ser-251, Arg-252, and Asn-253. Lys-188 functions as the Proton acceptor in the catalytic mechanism. Arg-252 is an NADPH binding site. NADPH-binding residues include Val-276 and Glu-278.

Belongs to the NAD-dependent glycerol-3-phosphate dehydrogenase family.

It localises to the cytoplasm. It carries out the reaction sn-glycerol 3-phosphate + NAD(+) = dihydroxyacetone phosphate + NADH + H(+). The enzyme catalyses sn-glycerol 3-phosphate + NADP(+) = dihydroxyacetone phosphate + NADPH + H(+). It participates in membrane lipid metabolism; glycerophospholipid metabolism. Catalyzes the reduction of the glycolytic intermediate dihydroxyacetone phosphate (DHAP) to sn-glycerol 3-phosphate (G3P), the key precursor for phospholipid synthesis. This Methylibium petroleiphilum (strain ATCC BAA-1232 / LMG 22953 / PM1) protein is Glycerol-3-phosphate dehydrogenase [NAD(P)+].